Here is a 497-residue protein sequence, read N- to C-terminus: Dol-P-Man:Man(7)GlcNAc(2)-PP-Dol alpha-1,6-mannosyltransferase (497 aa).

The next 7 membrane-spanning stretches (helical) occupy residues 10-30 (FLQS…YVVM), 71-91 (FIGA…ISCL), 92-112 (GFPK…IILS), 125-145 (FGNQ…HFLF), 154-174 (ILAL…NFYP), 178-198 (FLIF…GPIG), and 215-235 (YCVG…SIMW). Asparagine 253 carries an N-linked (GlcNAc...) asparagine glycan. 4 helical membrane passes run 263-285 (IHWY…SLLG), 292-312 (VPFF…LPHK), 316-336 (FIIS…SRIY), and 346-366 (LVNM…VVTF). Asparagine 435 carries an N-linked (GlcNAc...) asparagine glycan.

It belongs to the glycosyltransferase 22 family.

It localises to the endoplasmic reticulum membrane. The catalysed reaction is an alpha-D-Man-(1-&gt;2)-alpha-D-Man-(1-&gt;2)-alpha-D-Man-(1-&gt;3)-[alpha-D-Man-(1-&gt;2)-alpha-D-Man-(1-&gt;3)-alpha-D-Man-(1-&gt;6)]-beta-D-Man-(1-&gt;4)-beta-D-GlcNAc-(1-&gt;4)-alpha-D-GlcNAc-diphospho-di-trans,poly-cis-dolichol + a di-trans,poly-cis-dolichyl beta-D-mannosyl phosphate = an alpha-D-Man-(1-&gt;2)-alpha-D-Man-(1-&gt;2)-alpha-D-Man-(1-&gt;3)-[alpha-D-Man-(1-&gt;2)-alpha-D-Man-(1-&gt;3)-[alpha-D-Man-(1-&gt;6)]-alpha-D-Man-(1-&gt;6)]-beta-D-Man-(1-&gt;4)-beta-D-GlcNAc-(1-&gt;4)-alpha-D-GlcNAc-diphospho-di-trans,poly-cis-dolichol + a di-trans,poly-cis-dolichyl phosphate + H(+). It functions in the pathway protein modification; protein glycosylation. Functionally, mannosyltransferase that operates in the biosynthetic pathway of dolichol-linked oligosaccharides, the glycan precursors employed in protein asparagine (N)-glycosylation. The assembly of dolichol-linked oligosaccharides begins on the cytosolic side of the endoplasmic reticulum membrane and finishes in its lumen. The sequential addition of sugars to dolichol pyrophosphate produces dolichol-linked oligosaccharides containing fourteen sugars, including two GlcNAcs, nine mannoses and three glucoses. Once assembled, the oligosaccharide is transferred from the lipid to nascent proteins by oligosaccharyltransferases. In the lumen of the endoplasmic reticulum, adds the eighth mannose residue in an alpha-1,6 linkage onto Man(7)GlcNAc(2)-PP-dolichol to produce Man(8)GlcNAc(2)-PP-dolichol. The sequence is that of Dol-P-Man:Man(7)GlcNAc(2)-PP-Dol alpha-1,6-mannosyltransferase (ALG12) from Arabidopsis thaliana (Mouse-ear cress).